Reading from the N-terminus, the 333-residue chain is Tetraacyldisaccharide 4'-kinase (333 aa).

60-67 (TVGGTGKT) lines the ATP pocket.

It belongs to the LpxK family.

The enzyme catalyses a lipid A disaccharide + ATP = a lipid IVA + ADP + H(+). Its pathway is glycolipid biosynthesis; lipid IV(A) biosynthesis; lipid IV(A) from (3R)-3-hydroxytetradecanoyl-[acyl-carrier-protein] and UDP-N-acetyl-alpha-D-glucosamine: step 6/6. Its function is as follows. Transfers the gamma-phosphate of ATP to the 4'-position of a tetraacyldisaccharide 1-phosphate intermediate (termed DS-1-P) to form tetraacyldisaccharide 1,4'-bis-phosphate (lipid IVA). The protein is Tetraacyldisaccharide 4'-kinase of Azotobacter vinelandii (strain DJ / ATCC BAA-1303).